The sequence spans 268 residues: NADPH-dependent 7-cyano-7-deazaguanine reductase (268 aa).

79-81 is a binding site for substrate; that stretch reads VES. 81 to 82 serves as a coordination point for NADPH; it reads SK. Cys176 acts as the Thioimide intermediate in catalysis. The Proton donor role is filled by Asp183. Residue 215–216 participates in substrate binding; that stretch reads HE. Position 244-245 (244-245) interacts with NADPH; the sequence is RG.

It belongs to the GTP cyclohydrolase I family. QueF type 2 subfamily. As to quaternary structure, homodimer.

It is found in the cytoplasm. The catalysed reaction is 7-aminomethyl-7-carbaguanine + 2 NADP(+) = 7-cyano-7-deazaguanine + 2 NADPH + 3 H(+). The protein operates within tRNA modification; tRNA-queuosine biosynthesis. Its function is as follows. Catalyzes the NADPH-dependent reduction of 7-cyano-7-deazaguanine (preQ0) to 7-aminomethyl-7-deazaguanine (preQ1). The protein is NADPH-dependent 7-cyano-7-deazaguanine reductase of Saccharophagus degradans (strain 2-40 / ATCC 43961 / DSM 17024).